We begin with the raw amino-acid sequence, 180 residues long: dCTP deaminase, dUMP-forming (180 aa).

Residues 100-105 (RSSLGR), aspartate 117, 125-127 (TLE), glutamine 146, tyrosine 160, and glutamine 167 each bind dCTP. Glutamate 127 (proton donor/acceptor) is an active-site residue.

This sequence belongs to the dCTP deaminase family. Homotrimer.

The catalysed reaction is dCTP + 2 H2O = dUMP + NH4(+) + diphosphate. It functions in the pathway pyrimidine metabolism; dUMP biosynthesis; dUMP from dCTP: step 1/1. Its function is as follows. Bifunctional enzyme that catalyzes both the deamination of dCTP to dUTP and the hydrolysis of dUTP to dUMP without releasing the toxic dUTP intermediate. The protein is dCTP deaminase, dUMP-forming of Persephonella marina (strain DSM 14350 / EX-H1).